Consider the following 357-residue polypeptide: Maleylacetate reductase 1 (357 aa).

Belongs to the iron-containing alcohol dehydrogenase family.

The enzyme catalyses 3-oxoadipate + NAD(+) = maleylacetate + NADH + H(+). It catalyses the reaction 3-oxoadipate + NADP(+) = maleylacetate + NADPH + H(+). It functions in the pathway aromatic compound metabolism; 3-chlorocatechol degradation. In terms of biological role, plays a major role in the degradation of chloroaromatic compounds by channeling maleylacetate and some of its substituted derivatives into the 3-oxoadipate pathway. This enzyme converts maleylacetate and 2-chloromaleylacetate with similar efficiencies. This chain is Maleylacetate reductase 1 (macA), found in Rhodococcus opacus (Nocardia opaca).